The chain runs to 301 residues: tRNA pseudouridine synthase B (301 aa).

The active-site Nucleophile is aspartate 48.

The protein belongs to the pseudouridine synthase TruB family. Type 1 subfamily.

The enzyme catalyses uridine(55) in tRNA = pseudouridine(55) in tRNA. Its function is as follows. Responsible for synthesis of pseudouridine from uracil-55 in the psi GC loop of transfer RNAs. In Mycobacterium ulcerans (strain Agy99), this protein is tRNA pseudouridine synthase B.